A 97-amino-acid polypeptide reads, in one-letter code: ESAT-6-like protein EsxG (97 aa).

Position 2 is an N-acetylserine (S2).

The protein belongs to the WXG100 family. CFP-10 subfamily. In terms of assembly, forms a tight 1:1 complex with EsxH.

The protein localises to the secreted. In terms of biological role, esxG, in complex with EsxH, disrupts ESCRT function and impairs host phagosome maturation, thereby promoting intracellular bacterial growth. The complex acts by interacting, via EsxH, with the host hepatocyte growth factor-regulated tyrosine kinase substrate (HGS/HRS), a component of the ESCRT machinery. EsxG stabilizes EsxH in the host cytosol. This is ESAT-6-like protein EsxG from Mycobacterium tuberculosis (strain ATCC 25618 / H37Rv).